The sequence spans 356 residues: Heat-inducible transcription repressor HrcA (356 aa).

Belongs to the HrcA family.

In terms of biological role, negative regulator of class I heat shock genes (grpE-dnaK-dnaJ and groELS operons). Prevents heat-shock induction of these operons. The chain is Heat-inducible transcription repressor HrcA from Bartonella quintana (strain Toulouse) (Rochalimaea quintana).